Reading from the N-terminus, the 1121-residue chain is Pleckstrin homology domain-containing family A member 7 (1121 aa).

WW domains follow at residues 9–42 (DTLP…HPRT) and 54–87 (SDLP…HPVT). The segment at 105 to 137 (PHMSKQDRNQRPSSMVSETSTAGTASTLEAKPG) is disordered. Residues 115–131 (RPSSMVSETSTAGTAST) show a composition bias toward polar residues. Residues 164–282 (PVVVRGWLHK…WVRAMNQAAQ (119 aa)) form the PH domain. The interval 299–514 (QAVPQANHTE…LKMSSEERRA (216 aa)) is disordered. Composition is skewed to basic and acidic residues over residues 308–356 (ESCH…EGKR) and 437–446 (HWARAQKGDS). Over residues 460–475 (PGQSLSFPENYQTLPK) the composition is skewed to polar residues. Over residues 497 to 514 (YAQDRASHLKMSSEERRA) the composition is skewed to basic and acidic residues. S536, S545, S569, S604, S608, and S612 each carry phosphoserine. The interval 538 to 696 (TAPICLGSPE…AESDTDVKLS (159 aa)) is interaction with CTNND1. Residues 547–632 (EFTDQGRSRS…NSSHVDRRSM (86 aa)) form a disordered region. Over residues 567–582 (PPSPSDIPPPGPPRVF) the composition is skewed to pro residues. Residues 589-605 (TPAERVTVKPPDQRRSV) are compositionally biased toward basic and acidic residues. A coiled-coil region spans residues 700 to 801 (EQDRVLQDLE…LQEQHRRAFF (102 aa)). Disordered stretches follow at residues 841-876 (RKTV…VRTP) and 888-971 (YVPY…ELGQ). A phosphoserine mark is found at S858, S860, and S867. Residues 861–871 (KPPPQPSPPTS) are compositionally biased toward pro residues. T870 bears the Phosphothreonine mark. Phosphoserine is present on residues S871, S903, and S907. A compositionally biased stretch (pro residues) spans 933-942 (DQPPAVPPLP). A compositionally biased stretch (basic and acidic residues) spans 958–969 (RQSDERKRDREL). Residue S986 is modified to Phosphoserine. Disordered stretches follow at residues 1003–1028 (GLVG…RLQQ) and 1082–1121 (RHQK…GSVC). Residues 1067 to 1094 (QRGKMSAEEQLERMKRHQKALVRERKRT) adopt a coiled-coil conformation. Positions 1082–1094 (RHQKALVRERKRT) are enriched in basic residues.

As to quaternary structure, interacts with CAMSAP3 and CTNND1. Interacts (via WW domains) with TSPAN33 (via cytoplasmic domain) and with PDZD11; the interaction with TSPAN33 is dependent on PDZD11 being bound to PLEKHA7 and facilitates the docking of ADAM10 to zonula adherens through interaction of TSPAN33 with ADAM10.

It localises to the cell junction. It is found in the adherens junction. Its subcellular location is the cytoplasm. The protein localises to the cytoskeleton. The protein resides in the microtubule organizing center. It localises to the centrosome. Functionally, required for zonula adherens biogenesis and maintenance. Acts via its interaction with CAMSAP3, which anchors microtubules at their minus-ends to zonula adherens, leading to the recruitment of KIFC3 kinesin to the junctional site. Mediates docking of ADAM10 to zonula adherens through a PDZD11-dependent interaction with the ADAM10-binding protein TSPAN33. This Homo sapiens (Human) protein is Pleckstrin homology domain-containing family A member 7 (PLEKHA7).